Here is an 886-residue protein sequence, read N- to C-terminus: Translation initiation factor IF-2 (886 aa).

Disordered stretches follow at residues 1-25 (MSET…LKRP), 50-229 (RRAL…PAEE), and 253-272 (KGAE…TGDE). A compositionally biased stretch (basic and acidic residues) spans 50 to 60 (RRALGEPHVLR). Positions 63–73 (APALDVVAPAP) are enriched in low complexity. Residues 74 to 83 (QAAPPAPTQQ) show a composition bias toward pro residues. Over residues 84–106 (PQPRVASRPQPQQRSSSGVILRS) the composition is skewed to low complexity. A compositionally biased stretch (basic and acidic residues) spans 107-181 (LTEEEREARS…KRRSESEAKR (75 aa)). The span at 185-225 (GGEPAPAGANAAPRKAPALSAAPGSAAPSGQPGPAGAVGAR) shows a compositional bias: low complexity. The tr-type G domain maps to 383–553 (SRPPVVTIMG…ALQAELLDLK (171 aa)). A G1 region spans residues 392-399 (GHVDHGKT). 392–399 (GHVDHGKT) contacts GTP. Residues 417–421 (GITQH) are G2. Positions 439 to 442 (DTPG) are G3. GTP-binding positions include 439 to 443 (DTPGH) and 493 to 496 (NKID). The G4 stretch occupies residues 493-496 (NKID). Residues 529-531 (SAT) are G5.

It belongs to the TRAFAC class translation factor GTPase superfamily. Classic translation factor GTPase family. IF-2 subfamily.

It localises to the cytoplasm. Its function is as follows. One of the essential components for the initiation of protein synthesis. Protects formylmethionyl-tRNA from spontaneous hydrolysis and promotes its binding to the 30S ribosomal subunits. Also involved in the hydrolysis of GTP during the formation of the 70S ribosomal complex. The chain is Translation initiation factor IF-2 from Methylocella silvestris (strain DSM 15510 / CIP 108128 / LMG 27833 / NCIMB 13906 / BL2).